A 143-amino-acid polypeptide reads, in one-letter code: Ribosome-binding factor A (143 aa).

The segment covering 119 to 129 (AVGDKPAVPRD) has biased composition (basic and acidic residues). A disordered region spans residues 119–143 (AVGDKPAVPRDDNDDPVSDNPERDA).

The protein belongs to the RbfA family. In terms of assembly, monomer. Binds 30S ribosomal subunits, but not 50S ribosomal subunits or 70S ribosomes.

It localises to the cytoplasm. In terms of biological role, one of several proteins that assist in the late maturation steps of the functional core of the 30S ribosomal subunit. Associates with free 30S ribosomal subunits (but not with 30S subunits that are part of 70S ribosomes or polysomes). Required for efficient processing of 16S rRNA. May interact with the 5'-terminal helix region of 16S rRNA. In Marinobacter nauticus (strain ATCC 700491 / DSM 11845 / VT8) (Marinobacter aquaeolei), this protein is Ribosome-binding factor A.